Consider the following 441-residue polypeptide: Probable dihydroorotase-like protein (441 aa).

Residues 121–140 are disordered; it reads VNAHHQPPGDPQAENRPDSA.

It belongs to the metallo-dependent hydrolases superfamily. DHOase family. PyrC' subfamily.

Functionally, non-functional DHOase. This chain is Probable dihydroorotase-like protein (pyrC'), found in Synechocystis sp. (strain ATCC 27184 / PCC 6803 / Kazusa).